Reading from the N-terminus, the 258-residue chain is HVA22-like protein j (258 aa).

The interval 153 to 258 is disordered; the sequence is AANQPPTERN…RSNSRTQPAA (106 aa). Polar residues predominate over residues 156-169; it reads QPPTERNVNMNAQS. The span at 206–215 shows a compositional bias: pro residues; sequence WPPPTPPPTP.

This sequence belongs to the DP1 family.

The polypeptide is HVA22-like protein j (HVA22J) (Arabidopsis thaliana (Mouse-ear cress)).